Here is a 122-residue protein sequence, read N- to C-terminus: Large ribosomal subunit protein uL14 (122 aa).

It belongs to the universal ribosomal protein uL14 family. As to quaternary structure, part of the 50S ribosomal subunit. Forms a cluster with proteins L3 and L19. In the 70S ribosome, L14 and L19 interact and together make contacts with the 16S rRNA in bridges B5 and B8.

In terms of biological role, binds to 23S rRNA. Forms part of two intersubunit bridges in the 70S ribosome. The chain is Large ribosomal subunit protein uL14 from Salinispora tropica (strain ATCC BAA-916 / DSM 44818 / JCM 13857 / NBRC 105044 / CNB-440).